The sequence spans 288 residues: Inositol monophosphatase 2 (288 aa).

Glu-81, Asp-101, Ile-103, and Asp-104 together coordinate Mg(2+). Residue Glu-81 participates in substrate binding. Residues 103–106, 205–207, Gln-224, and Asp-231 contribute to the substrate site; these read IDGT and GSS. Asp-231 lines the Mg(2+) pocket.

Belongs to the inositol monophosphatase superfamily. As to quaternary structure, homodimer. Requires Mg(2+) as cofactor.

It localises to the cytoplasm. It carries out the reaction a myo-inositol phosphate + H2O = myo-inositol + phosphate. It catalyses the reaction 1D-myo-inositol 1-phosphate + H2O = myo-inositol + phosphate. The catalysed reaction is 1D-myo-inositol 2-phosphate + H2O = myo-inositol + phosphate. The enzyme catalyses 1D-myo-inositol 3-phosphate + H2O = myo-inositol + phosphate. It carries out the reaction 1D-myo-inositol 4-phosphate + H2O = myo-inositol + phosphate. It catalyses the reaction 1D-myo-inositol 5-phosphate + H2O = myo-inositol + phosphate. The catalysed reaction is 1D-myo-inositol 6-phosphate + H2O = myo-inositol + phosphate. The enzyme catalyses alpha-D-glucose 1-phosphate + H2O = D-glucose + phosphate. It carries out the reaction glycerol 2-phosphate + H2O = glycerol + phosphate. It catalyses the reaction adenosine 2'-phosphate + H2O = adenosine + phosphate. Its pathway is polyol metabolism; myo-inositol biosynthesis; myo-inositol from D-glucose 6-phosphate: step 2/2. Its activity is regulated as follows. Inhibited by high Li(+) and restricted Mg(2+) concentrations. Phosphatase that can use myo-inositol monophosphates, myo-inositol 1,4-diphosphate, scyllo-inositol-1,4-diphosphate, glucose-1-phosphate, beta-glycerophosphate and 2'-AMP as substrates in vitro. It is likely that IMPA2 has an as yet unidentified in vivo substrate(s). Has been implicated as the pharmacological target for lithium (Li(+)) action in brain. This chain is Inositol monophosphatase 2, found in Homo sapiens (Human).